Here is a 1734-residue protein sequence, read N- to C-terminus: Gag-pol polyprotein (1734 aa).

A lipid anchor (N-myristoyl glycine; by host) is attached at Gly2. The PTAP/PSAP motif motif lies at 109 to 112 (PTAP). Positions 112-217 (PILPSGPSTQ…STTSRAFPLR (106 aa)) are disordered. The LYPX(n)L motif signature appears at 128 to 132 (LYPAF). The short motif at 161–164 (PPPY) is the PPXY motif element. At Ser191 the chain carries Phosphoserine; by host. The interaction with host PIAS4 stretch occupies residues 344 to 392 (GRSPTNLAKVKGITQGPNESPSAFLERLKEAYRRYTPYDPEDPGQETNV). Residues 429–434 (IFNKRE) form an interaction with host UBE2I region. Composition is skewed to basic and acidic residues over residues 433 to 474 (RETP…REMS) and 485 to 498 (RQDR…RPQL). Disordered regions lie at residues 433-498 (RETP…RPQL) and 512-551 (WAKD…EPRI). The CCHC-type zinc finger occupies 501–518 (DQCAYCKEKGHWAKDCPK). One can recognise a Peptidase A2 domain in the interval 560–630 (VTFLVDTGAQ…CPYPLLGRDL (71 aa)). Catalysis depends on Asp565, which acts as the Protease; shared with dimeric partner. Positions 740 to 931 (LDQGILVPCQ…KQVKYLGYLL (192 aa)) constitute a Reverse transcriptase domain. Asp808, Asp882, Asp883, Asp1182, Glu1220, Asp1241, and Asp1311 together coordinate Mg(2+). Residues 1173-1319 (PDADHTWYTD…ADQAAREAAI (147 aa)) form the RNase H type-1 domain. An HHCC-type zinc finger spans residues 1386-1426 (HRLTHLGYQKMKALLDRGESPYYMLNRDKTLQYVADSCTVC). Residues 1443–1601 (RGHRPGTHWE…TPYEILYGAP (159 aa)) form the Integrase catalytic domain. Mg(2+)-binding residues include Asp1454 and Asp1513.

Homohexamer; further associates as homomultimer. The virus core is composed of a lattice formed from hexagonal rings, each containing six capsid monomers. Interacts with mouse UBE2I and mouse PIAS4. In terms of assembly, interacts (via PPXY motif) with host NEDD4. Interacts (via PSAP motif) with host TSG101. Interacts (via LYPX(n)L motif) with host PDCD6IP. As to quaternary structure, the reverse transcriptase is a monomer (Potential). Interacts (via RNase domains) with host release factor ETF1; this interaction is essential for translational readthrough of amber codon between viral gag and pol genes, as well as for viral replication. Homodimer. Mg(2+) is required as a cofactor. Post-translationally, ubiquitinated by ITCH. Gag can recruit the ubiquitin ligase Itch in an L domain-independent manner to facilitate virus release via a mechanism that involves Gag ubiquitination. Specific enzymatic cleavages by the viral protease yield mature proteins. The protease is released by autocatalytic cleavage. The polyprotein is cleaved during and after budding, this process is termed maturation. In terms of processing, sumoylated; which is required for virus replication. Post-translationally, phosphorylated on serine residues.

The protein resides in the virion. It localises to the host cell membrane. Its subcellular location is the host late endosome membrane. It is found in the host endosome. The protein localises to the host multivesicular body. The protein resides in the host cytoplasm. The enzyme catalyses DNA(n) + a 2'-deoxyribonucleoside 5'-triphosphate = DNA(n+1) + diphosphate. It catalyses the reaction Endonucleolytic cleavage to 5'-phosphomonoester.. Most efficiently inhibited by Amprenavir, which is able to block Gag-Pol processing in infected cells. Functionally, plays a role in budding and is processed by the viral protease during virion maturation outside the cell. During budding, it recruits, in a PPXY-dependent or independent manner, Nedd4-like ubiquitin ligases that conjugate ubiquitin molecules to Gag-Pol, or to Gag-Pol binding host factors. Interaction with HECT ubiquitin ligases probably links the viral protein to the host ESCRT pathway and facilitates release. Targets Gag and gag-pol polyproteins to the plasma membrane via a multipartite membrane binding signal, that includes its myristoylated N-terminus. Also mediates nuclear localization of the pre-integration complex. Its function is as follows. Constituent of the pre-integration complex (PIC) which tethers the latter to mitotic chromosomes. This allows the integration of the viral genome into the host DNA. In terms of biological role, forms the spherical core of the virion that encapsulates the genomic RNA-nucleocapsid complex. Functionally, involved in the packaging and encapsidation of two copies of the genome. Binds with high affinity to conserved UCUG elements within the packaging signal, located near the 5'-end of the genome. This binding is dependent on genome dimerization. Acts as a nucleic acid chaperone which is involved in rearrangement of nucleic acid secondary structures during gRNA retrotranscription. The aspartyl protease mediates proteolytic cleavages of Gag and Gag-Pol polyproteins during or shortly after the release of the virion from the plasma membrane. Cleavages take place as an ordered, step-wise cascade to yield mature proteins. This process is called maturation. Displays maximal activity during the budding process just prior to particle release from the cell (Potential). Cleaves the translation initiation factor eIF4G leading to the inhibition of host cap-dependent translation. Its function is as follows. RT is a multifunctional enzyme that converts the viral dimeric RNA genome into dsDNA in the cytoplasm, shortly after virus entry into the cell. This enzyme displays a DNA polymerase activity that can copy either DNA or RNA templates, and a ribonuclease H (RNase H) activity that cleaves the RNA strand of RNA-DNA heteroduplexes in a partially processive 3' to 5' endonucleasic mode. Conversion of viral genomic RNA into dsDNA requires many steps. A tRNA binds to the primer-binding site (PBS) situated at the 5' end of the viral RNA. RT uses the 3' end of the tRNA primer to perform a short round of RNA-dependent minus-strand DNA synthesis. The reading proceeds through the U5 region and ends after the repeated (R) region which is present at both ends of viral RNA. The portion of the RNA-DNA heteroduplex is digested by the RNase H, resulting in a ssDNA product attached to the tRNA primer. This ssDNA/tRNA hybridizes with the identical R region situated at the 3' end of viral RNA. This template exchange, known as minus-strand DNA strong stop transfer, can be either intra- or intermolecular. RT uses the 3' end of this newly synthesized short ssDNA to perform the RNA-dependent minus-strand DNA synthesis of the whole template. RNase H digests the RNA template except for a polypurine tract (PPT) situated at the 5' end of the genome. It is not clear if both polymerase and RNase H activities are simultaneous. RNase H probably can proceed both in a polymerase-dependent (RNA cut into small fragments by the same RT performing DNA synthesis) and a polymerase-independent mode (cleavage of remaining RNA fragments by free RTs). Secondly, RT performs DNA-directed plus-strand DNA synthesis using the PPT that has not been removed by RNase H as primers. PPT and tRNA primers are then removed by RNase H. The 3' and 5' ssDNA PBS regions hybridize to form a circular dsDNA intermediate. Strand displacement synthesis by RT to the PBS and PPT ends produces a blunt ended, linear dsDNA copy of the viral genome that includes long terminal repeats (LTRs) at both ends. In terms of biological role, catalyzes viral DNA integration into the host chromosome, by performing a series of DNA cutting and joining reactions. This enzyme activity takes place after virion entry into a cell and reverse transcription of the RNA genome in dsDNA. The first step in the integration process is 3' processing. This step requires a complex comprising the viral genome, matrix protein and integrase. This complex is called the pre-integration complex (PIC). The integrase protein removes 2 nucleotides from each 3' end of the viral DNA, leaving recessed CA OH's at the 3' ends. In the second step that requires cell division, the PIC enters cell nucleus. In the third step, termed strand transfer, the integrase protein joins the previously processed 3' ends to the 5' ends of strands of target cellular DNA at the site of integration. The last step is viral DNA integration into host chromosome. This Mus musculus (Mouse) protein is Gag-pol polyprotein (gag-pol).